The primary structure comprises 447 residues: Phosphoglucosamine mutase (447 aa).

Catalysis depends on Ser100, which acts as the Phosphoserine intermediate. Residues Ser100, Asp239, Asp241, and Asp243 each coordinate Mg(2+). Ser100 carries the phosphoserine modification.

The protein belongs to the phosphohexose mutase family. It depends on Mg(2+) as a cofactor. In terms of processing, activated by phosphorylation.

It catalyses the reaction alpha-D-glucosamine 1-phosphate = D-glucosamine 6-phosphate. Catalyzes the conversion of glucosamine-6-phosphate to glucosamine-1-phosphate. The polypeptide is Phosphoglucosamine mutase (Dictyoglomus turgidum (strain DSM 6724 / Z-1310)).